A 611-amino-acid chain; its full sequence is Elongation factor 4 (611 aa).

A tr-type G domain is found at 12 to 194 (SRIRNFSIIA…QIVEKVPAPA (183 aa)). GTP contacts are provided by residues 24–29 (DHGKST) and 141–144 (NKID).

Belongs to the TRAFAC class translation factor GTPase superfamily. Classic translation factor GTPase family. LepA subfamily.

It localises to the cell membrane. The enzyme catalyses GTP + H2O = GDP + phosphate + H(+). Its function is as follows. Required for accurate and efficient protein synthesis under certain stress conditions. May act as a fidelity factor of the translation reaction, by catalyzing a one-codon backward translocation of tRNAs on improperly translocated ribosomes. Back-translocation proceeds from a post-translocation (POST) complex to a pre-translocation (PRE) complex, thus giving elongation factor G a second chance to translocate the tRNAs correctly. Binds to ribosomes in a GTP-dependent manner. This is Elongation factor 4 from Bacillus velezensis (strain DSM 23117 / BGSC 10A6 / LMG 26770 / FZB42) (Bacillus amyloliquefaciens subsp. plantarum).